The chain runs to 278 residues: Secoisolariciresinol dehydrogenase (278 aa).

Residues 23–28 (GGAGGI), Asp47, Val73, and Asn99 contribute to the NAD(+) site. Positions 104 and 164 each coordinate substrate. The Proton donor/acceptor role is filled by Tyr167. The NAD(+) site is built by Lys171 and Val200.

Belongs to the short-chain dehydrogenases/reductases (SDR) family. As to quaternary structure, homotetramer. As to expression, mostly expressed in stems and rhizomes, and, to a lower extent, in leaves.

The catalysed reaction is (-)-secoisolariciresinol + 2 NAD(+) = (-)-matairesinol + 2 NADH + 2 H(+). Its pathway is aromatic compound metabolism; phenylpropanoid biosynthesis. Oxidoreductase involved in lignan biosynthesis. Also involved in the biosynthesis of etoposide, a chemotherapeutic compound of the topoisomerase inhibitor family. Catalyzes the stereospecific conversion of (-)-secoisolariciresinol to (-)-matairesinol via a lactol intermediate. The sequence is that of Secoisolariciresinol dehydrogenase from Sinopodophyllum hexandrum (Himalayan may apple).